Reading from the N-terminus, the 313-residue chain is Deoxyribonucleoside regulator (313 aa).

The segment at residues 23–42 (QQQIAEQLNISRPTVSRLLQ) is a DNA-binding region (H-T-H motif).

Belongs to the SorC transcriptional regulatory family. Homooctamer.

Functionally, negative regulator of the dra-nupC-pdp operon. DeoR binds cooperatively to the operator DNA, which consists of a palindrome and a direct repeat sequence located 3' to the palindrome. The chain is Deoxyribonucleoside regulator from Bacillus subtilis (strain 168).